The following is a 365-amino-acid chain: Chorismate synthase (365 aa).

R47 is an NADP(+) binding site. FMN-binding positions include R124–S126, G287, K302–T306, and R328.

Belongs to the chorismate synthase family. In terms of assembly, homotetramer. The cofactor is FMNH2.

The enzyme catalyses 5-O-(1-carboxyvinyl)-3-phosphoshikimate = chorismate + phosphate. It functions in the pathway metabolic intermediate biosynthesis; chorismate biosynthesis; chorismate from D-erythrose 4-phosphate and phosphoenolpyruvate: step 7/7. Its function is as follows. Catalyzes the anti-1,4-elimination of the C-3 phosphate and the C-6 proR hydrogen from 5-enolpyruvylshikimate-3-phosphate (EPSP) to yield chorismate, which is the branch point compound that serves as the starting substrate for the three terminal pathways of aromatic amino acid biosynthesis. This reaction introduces a second double bond into the aromatic ring system. This chain is Chorismate synthase, found in Prochlorococcus marinus (strain MIT 9215).